A 546-amino-acid chain; its full sequence is Inosine-5'-monophosphate dehydrogenase (546 aa).

CBS domains lie at 135 to 197 (FILD…VTAI) and 198 to 254 (MSTD…PLAS). Residues 292–294 (DSS) and 342–344 (GMG) contribute to the NAD(+) site. 2 residues coordinate K(+): glycine 344 and glycine 346. Serine 347 contacts IMP. Position 349 (cysteine 349) interacts with K(+). Residue cysteine 349 is the Thioimidate intermediate of the active site. IMP contacts are provided by residues 382 to 384 (DGG), 405 to 406 (GG), and 430 to 434 (YRGMG). The Proton acceptor role is filled by arginine 460. Position 472 (glutamine 472) interacts with IMP. Residues glutamate 531 and glycine 532 each coordinate K(+).

The protein belongs to the IMPDH/GMPR family. As to quaternary structure, homotetramer. K(+) is required as a cofactor.

The protein localises to the cytoplasm. The catalysed reaction is IMP + NAD(+) + H2O = XMP + NADH + H(+). It participates in purine metabolism; XMP biosynthesis via de novo pathway; XMP from IMP: step 1/1. With respect to regulation, mycophenolic acid (MPA) is a non-competitive inhibitor that prevents formation of the closed enzyme conformation by binding to the same site as the amobile flap. In contrast, mizoribine monophosphate (MZP) is a competitive inhibitor that induces the closed conformation. MPA is a potent inhibitor of mammalian IMPDHs but a poor inhibitor of the bacterial enzymes. MZP is a more potent inhibitor of bacterial IMPDH. In terms of biological role, catalyzes the conversion of inosine 5'-phosphate (IMP) to xanthosine 5'-phosphate (XMP), the first committed and rate-limiting step in the de novo synthesis of guanine nucleotides, and therefore plays an important role in the regulation of cell growth. This chain is Inosine-5'-monophosphate dehydrogenase, found in Aspergillus fumigatus (strain ATCC MYA-4609 / CBS 101355 / FGSC A1100 / Af293) (Neosartorya fumigata).